The chain runs to 353 residues: UPF0283 membrane protein KPN78578_12740 (353 aa).

3 helical membrane-spanning segments follow: residues 70–90 (MVSAGLAIFGVSVVAQGVQWT), 99–119 (WIALGGCVAGALIVGAGVGSL), and 213–233 (ESTLMIAVSPLALVDMAFIAW).

Belongs to the UPF0283 family.

Its subcellular location is the cell inner membrane. This Klebsiella pneumoniae subsp. pneumoniae (strain ATCC 700721 / MGH 78578) protein is UPF0283 membrane protein KPN78578_12740.